The sequence spans 452 residues: Glutamyl-tRNA(Gln) amidotransferase subunit A (452 aa).

Residues K56 and S131 each act as charge relay system in the active site. S155 serves as the catalytic Acyl-ester intermediate.

This sequence belongs to the amidase family. GatA subfamily. In terms of assembly, heterotrimer of A, B and C subunits.

The enzyme catalyses L-glutamyl-tRNA(Gln) + L-glutamine + ATP + H2O = L-glutaminyl-tRNA(Gln) + L-glutamate + ADP + phosphate + H(+). Functionally, allows the formation of correctly charged Gln-tRNA(Gln) through the transamidation of misacylated Glu-tRNA(Gln) in organisms which lack glutaminyl-tRNA synthetase. The reaction takes place in the presence of glutamine and ATP through an activated gamma-phospho-Glu-tRNA(Gln). The polypeptide is Glutamyl-tRNA(Gln) amidotransferase subunit A (Campylobacter curvus (strain 525.92)).